We begin with the raw amino-acid sequence, 546 residues long: Probable protein kinase UbiB (546 aa).

The 379-residue stretch at 124 to 502 (DFDITPLASA…RVKQGQSRYL (379 aa)) folds into the Protein kinase domain. ATP is bound by residues 130–138 (LASASIAQV) and K153. D288 functions as the Proton acceptor in the catalytic mechanism. Transmembrane regions (helical) follow at residues 501–518 (YLFG…LLFI) and 523–542 (WGMS…LIGW).

The protein belongs to the ABC1 family. UbiB subfamily.

The protein localises to the cell inner membrane. It participates in cofactor biosynthesis; ubiquinone biosynthesis [regulation]. Its function is as follows. Is probably a protein kinase regulator of UbiI activity which is involved in aerobic coenzyme Q (ubiquinone) biosynthesis. The polypeptide is Probable protein kinase UbiB (Cronobacter sakazakii (strain ATCC BAA-894) (Enterobacter sakazakii)).